The primary structure comprises 469 residues: NADH-quinone oxidoreductase subunit N (469 aa).

Transmembrane regions (helical) follow at residues 9-29 (PLLM…LIAG), 40-60 (VGVM…VQMV), 76-96 (ATGV…AVAG), 105-125 (EAET…LAGA), 128-148 (LLLL…LVGL), 162-182 (YLMG…LYGL), 201-221 (VAVA…AGGV), 234-254 (ANAT…LVAL), 265-285 (LAWP…GNLA), 294-316 (RLLG…VAGA), 327-347 (YLGG…ALPG), 365-385 (AAAL…AVFI), 402-422 (LAVV…RWII), and 448-468 (VLAA…WQLV).

Belongs to the complex I subunit 2 family. NDH-1 is composed of 14 different subunits. Subunits NuoA, H, J, K, L, M, N constitute the membrane sector of the complex.

It is found in the cell membrane. It catalyses the reaction a quinone + NADH + 5 H(+)(in) = a quinol + NAD(+) + 4 H(+)(out). Its function is as follows. NDH-1 shuttles electrons from NADH, via FMN and iron-sulfur (Fe-S) centers, to quinones in the respiratory chain. The immediate electron acceptor for the enzyme in this species is believed to be a menaquinone. Couples the redox reaction to proton translocation (for every two electrons transferred, four hydrogen ions are translocated across the cytoplasmic membrane), and thus conserves the redox energy in a proton gradient. The polypeptide is NADH-quinone oxidoreductase subunit N (Mycobacterium sp. (strain JLS)).